A 330-amino-acid polypeptide reads, in one-letter code: Tetraacyldisaccharide 4'-kinase (330 aa).

58–65 lines the ATP pocket; it reads TVGGSGKT.

The protein belongs to the LpxK family.

It catalyses the reaction a lipid A disaccharide + ATP = a lipid IVA + ADP + H(+). It functions in the pathway glycolipid biosynthesis; lipid IV(A) biosynthesis; lipid IV(A) from (3R)-3-hydroxytetradecanoyl-[acyl-carrier-protein] and UDP-N-acetyl-alpha-D-glucosamine: step 6/6. Its function is as follows. Transfers the gamma-phosphate of ATP to the 4'-position of a tetraacyldisaccharide 1-phosphate intermediate (termed DS-1-P) to form tetraacyldisaccharide 1,4'-bis-phosphate (lipid IVA). The chain is Tetraacyldisaccharide 4'-kinase from Shewanella halifaxensis (strain HAW-EB4).